Here is a 397-residue protein sequence, read N- to C-terminus: Elongation factor Tu (397 aa).

One can recognise a tr-type G domain in the interval 10 to 207 (KPHVNIGTLG…AVDNNIPDPV (198 aa)). Residues 19–26 (GHVDHGKT) form a G1 region. 19–26 (GHVDHGKT) lines the GTP pocket. T26 is a Mg(2+) binding site. The G2 stretch occupies residues 63 to 67 (GITIN). The G3 stretch occupies residues 84 to 87 (DAPG). Residues 84–88 (DAPGH) and 139–142 (NKSD) each bind GTP. A G4 region spans residues 139–142 (NKSD). The tract at residues 177–179 (SGL) is G5.

This sequence belongs to the TRAFAC class translation factor GTPase superfamily. Classic translation factor GTPase family. EF-Tu/EF-1A subfamily. Monomer.

The protein resides in the cytoplasm. The catalysed reaction is GTP + H2O = GDP + phosphate + H(+). In terms of biological role, GTP hydrolase that promotes the GTP-dependent binding of aminoacyl-tRNA to the A-site of ribosomes during protein biosynthesis. The polypeptide is Elongation factor Tu (Leifsonia xyli subsp. xyli (strain CTCB07)).